Here is a 229-residue protein sequence, read N- to C-terminus: Aspartate-rich protein 1 (229 aa).

Residues 84 to 106 (SEEDNDDAKILPSPVQGSSEDNL) are disordered.

This chain is Aspartate-rich protein 1 (DRICH1), found in Homo sapiens (Human).